We begin with the raw amino-acid sequence, 394 residues long: RNA-binding motif protein, X-linked-like-2 (394 aa).

Positions 8–86 (GKLFIGGLNL…KAIKVAQATK (79 aa)) constitute an RRM domain. The span at 67-78 (RDMNGKSLDGKA) shows a compositional bias: basic and acidic residues. Residues 67 to 394 (RDMNGKSLDG…MERGGGRSRY (328 aa)) form a disordered region. A compositionally biased stretch (pro residues) spans 150 to 165 (RGPPPPPRRAGPPPKR). Composition is skewed to basic and acidic residues over residues 196–231 (PRRE…REPR) and 239–285 (EYTH…REPF). The segment covering 321–333 (YSGGRDSYSSSYG) has biased composition (low complexity). Basic and acidic residues-rich tracts occupy residues 334–350 (RSDR…RPDR) and 383–394 (GRMERGGGRSRY).

Its subcellular location is the nucleus. This chain is RNA-binding motif protein, X-linked-like-2 (RBMXL2), found in Macaca fascicularis (Crab-eating macaque).